We begin with the raw amino-acid sequence, 462 residues long: MPLRPRLLLLCLWGLLLQQAETDSEGQTTGELYQRWERYARECEETLTAADPPSGMVCNGSFDMYVCWDYTAANTTAQASCPWYLPWYRHVAAGYVFRQCGSDGQWGPWRDHTQCENPEKNGAFQDQRLILERLQVVYTVGYSLSLGTLLLALLILSLFRRLHCTRNYIHMNVFLSFMLRAVAILTRDRLLPTLGPYPGDRTLTLRNQALAACRTAQIVTQYCVGANYTWLLVEGVYLHHLLVIVGGSEKGHFRCYLLLGWGAPALFVIPWVIVRYLLENTQCWERNEVKAIWWIIRTPILITILINFFIFIRILGILVSKLRTRQMRCPDYRLRLARSTLTLVPLLGVHEVVFAPVTEEQAEGTLRFAKLAFEIFLSSFQGFLVSVLYCFINKEVQSEIRRSWRHRVLHLSLRDERPCPHAELGPQALPSRSAPREVPITGSTLPSGPLHGPGEEVLESYC.

The N-terminal stretch at 1–18 is a signal peptide; that stretch reads MPLRPRLLLLCLWGLLLQ. The Extracellular portion of the chain corresponds to 19-135; it reads QAETDSEGQT…DQRLILERLQ (117 aa). 3 cysteine pairs are disulfide-bonded: C43–C67, C58–C100, and C81–C115. N-linked (GlcNAc...) asparagine glycosylation is found at N59 and N74. A helical membrane pass occupies residues 136–158; the sequence is VVYTVGYSLSLGTLLLALLILSL. The Cytoplasmic portion of the chain corresponds to 159–166; that stretch reads FRRLHCTR. Residues 167-186 form a helical membrane-spanning segment; it reads NYIHMNVFLSFMLRAVAILT. The Extracellular portion of the chain corresponds to 187–214; the sequence is RDRLLPTLGPYPGDRTLTLRNQALAACR. A helical membrane pass occupies residues 215–239; that stretch reads TAQIVTQYCVGANYTWLLVEGVYLH. The Cytoplasmic segment spans residues 240-251; that stretch reads HLLVIVGGSEKG. Residues 252 to 275 form a helical membrane-spanning segment; the sequence is HFRCYLLLGWGAPALFVIPWVIVR. The Extracellular portion of the chain corresponds to 276-290; that stretch reads YLLENTQCWERNEVK. Residues 291–316 form a helical membrane-spanning segment; it reads AIWWIIRTPILITILINFFIFIRILG. Over 317–338 the chain is Cytoplasmic; it reads ILVSKLRTRQMRCPDYRLRLAR. Residues 339–359 traverse the membrane as a helical segment; the sequence is STLTLVPLLGVHEVVFAPVTE. Topologically, residues 360–374 are extracellular; the sequence is EQAEGTLRFAKLAFE. Residues 375 to 395 form a helical membrane-spanning segment; it reads IFLSSFQGFLVSVLYCFINKE. Residues 396 to 462 are Cytoplasmic-facing; sequence VQSEIRRSWR…PGEEVLESYC (67 aa). The segment at 421-462 is disordered; sequence HAELGPQALPSRSAPREVPITGSTLPSGPLHGPGEEVLESYC.

Belongs to the G-protein coupled receptor 2 family. May form homodimers and heterodimers with GLP1R. Post-translationally, N-glycosylation is required for cell surface expression and lengthens receptor half-life by preventing degradation in the ER. In terms of tissue distribution, widely distributed including pancreatic islets, brain and various peripheral tissues.

It is found in the cell membrane. Its function is as follows. This is a receptor for GIP. The activity of this receptor is mediated by G proteins which activate adenylyl cyclase. The polypeptide is Gastric inhibitory polypeptide receptor (GIPR) (Mesocricetus auratus (Golden hamster)).